Here is a 50-residue protein sequence, read N- to C-terminus: Photosystem II reaction center protein M (50 aa).

The chain crosses the membrane as a helical span at residues 7–27 (GFIISLLFVGIPTIFLVGLYI). The disordered stretch occupies residues 31–50 (DGEKSSFFSDSSKGKLGPKS).

The protein belongs to the PsbM family. PSII is composed of 1 copy each of membrane proteins PsbA, PsbB, PsbC, PsbD, PsbE, PsbF, PsbH, PsbI, PsbJ, PsbK, PsbL, PsbM, PsbT, PsbX, PsbY, Psb30/Ycf12, peripheral proteins PsbO, CyanoQ (PsbQ), PsbU, PsbV and a large number of cofactors. It forms dimeric complexes.

It is found in the cellular thylakoid membrane. In terms of biological role, one of the components of the core complex of photosystem II (PSII). PSII is a light-driven water:plastoquinone oxidoreductase that uses light energy to abstract electrons from H(2)O, generating O(2) and a proton gradient subsequently used for ATP formation. It consists of a core antenna complex that captures photons, and an electron transfer chain that converts photonic excitation into a charge separation. This subunit is found at the monomer-monomer interface. This chain is Photosystem II reaction center protein M, found in Prochlorococcus marinus (strain SARG / CCMP1375 / SS120).